The sequence spans 244 residues: MNEIREAAVQTPEQATAVIRAEALAKTYAEGKMRTPVFDGLDLSVATGETVAIVGASGAGKSTLLHLLGGLDIPTSGEVYVAGERMSALSDAQRGKLRNQALGFVYQFHHLLPEFTALENVMMPVLLSGKDVAVAKGQALQLLESVGLGHRVEHKPSELSGGERQRCAVARALVNKPGCVLGDEPTGNLDDKTAGTVFELMLELNRAQRTSLVLVTHDRGLARRLDRVLELNQGKLRELAPSAV.

The 226-residue stretch at 19–244 folds into the ABC transporter domain; the sequence is IRAEALAKTY…KLRELAPSAV (226 aa). Position 55 to 62 (55 to 62) interacts with ATP; sequence GASGAGKS.

This sequence belongs to the ABC transporter superfamily. Lipoprotein translocase (TC 3.A.1.125) family. In terms of assembly, the complex is composed of two ATP-binding proteins (LolD) and two transmembrane proteins (LolC and LolE).

Its subcellular location is the cell inner membrane. In terms of biological role, part of the ABC transporter complex LolCDE involved in the translocation of mature outer membrane-directed lipoproteins, from the inner membrane to the periplasmic chaperone, LolA. Responsible for the formation of the LolA-lipoprotein complex in an ATP-dependent manner. The protein is Lipoprotein-releasing system ATP-binding protein LolD of Xanthomonas euvesicatoria pv. vesicatoria (strain 85-10) (Xanthomonas campestris pv. vesicatoria).